A 955-amino-acid chain; its full sequence is Coiled-coil domain-containing protein 146 (955 aa).

Positions 1–17 (MEDSSTDTEKEEEEEKD) are enriched in acidic residues. Residues 1–22 (MEDSSTDTEKEEEEEKDEKDQE) form a disordered region. 5 coiled-coil regions span residues 114–141 (EAFSTEVSKMREQLLKYQNEYNAVKERE), 169–321 (GEME…AREN), 400–461 (STLS…LLRM), 534–640 (KAHQ…RNES), and 667–832 (NGEI…MKQA).

Interacts with CCDC38 and CCDC42. Interacts with intraflagellar transport proteins IFT20 and IFT88. As to quaternary structure, (Microbial infection) Interacts with Chlamydia trachomatis incM/YT288. In host cells infected with C.trachomatis incM, CCDC146 is recruited to the periphery of the pathogen-containing vacuole but recruitment is not dependent on incM. As to expression, widely expressed.

The protein localises to the cytoplasm. It localises to the cytoskeleton. The protein resides in the microtubule organizing center. It is found in the centrosome. Its subcellular location is the centriole. The protein localises to the flagellum axoneme. It localises to the cilium basal body. The protein resides in the midbody. Functionally, essential for sperm flagellum biogenesis and male fertility. The chain is Coiled-coil domain-containing protein 146 (CCDC146) from Homo sapiens (Human).